The following is a 316-amino-acid chain: tRNA-cytidine(32) 2-sulfurtransferase (316 aa).

The short motif at 52-57 (SGGKDS) is the PP-loop motif element. [4Fe-4S] cluster is bound by residues cysteine 127, cysteine 130, and cysteine 218.

It belongs to the TtcA family. As to quaternary structure, homodimer. Mg(2+) serves as cofactor. Requires [4Fe-4S] cluster as cofactor.

It is found in the cytoplasm. The catalysed reaction is cytidine(32) in tRNA + S-sulfanyl-L-cysteinyl-[cysteine desulfurase] + AH2 + ATP = 2-thiocytidine(32) in tRNA + L-cysteinyl-[cysteine desulfurase] + A + AMP + diphosphate + H(+). It participates in tRNA modification. Catalyzes the ATP-dependent 2-thiolation of cytidine in position 32 of tRNA, to form 2-thiocytidine (s(2)C32). The sulfur atoms are provided by the cysteine/cysteine desulfurase (IscS) system. This chain is tRNA-cytidine(32) 2-sulfurtransferase, found in Haemophilus ducreyi (strain 35000HP / ATCC 700724).